Consider the following 152-residue polypeptide: Serglycin (152 aa).

The N-terminal stretch at 1 to 25 (MQVPVGSRLVLALAFVLVWGSSVQG) is a signal peptide. Positions 26–74 (YPARRARYQWVRCKPNGFFANCIEEKGPQFDLIDESNNIGPPMNNPVLM) are cleaved as a propeptide — activation peptide. A disulfide bridge links Cys-38 with Cys-47. Residues 66–115 (PPMNNPVLMEGPSKDFISNYDDYGSGSGSGSGSGSGSGSGSGSGFLGDME) form a disordered region. Tandem repeats lie at residues 89-90 (GS), 91-92 (GS), 93-94 (GS), 95-96 (GS), 97-98 (GS), 99-100 (GS), 101-102 (GS), 103-104 (GS), 105-106 (GS), and 107-108 (GS). The tract at residues 89 to 108 (GSGSGSGSGSGSGSGSGSGS) is 10 X 2 AA tandem repeats of G-S. Positions 90-110 (SGSGSGSGSGSGSGSGSGSGF) are enriched in gly residues. Residues Ser-92 and Ser-94 are each glycosylated (O-linked (Xyl...) (glycosaminoglycan) serine). Residues Ser-98, Ser-100, Ser-102, Ser-104, Ser-106, and Ser-108 are each glycosylated (O-linked (Xyl...) (glycosaminoglycan) serine).

The protein belongs to the serglycin family. Binds to activated CD44 and to GZMB. Post-translationally, O-glycosylated; contains chondroitin sulfate and heparan sulfate.

The protein localises to the cytoplasmic granule. The protein resides in the cytolytic granule. It localises to the secreted. Its subcellular location is the extracellular space. It is found in the golgi apparatus. In terms of biological role, plays a role in formation of mast cell secretory granules and mediates storage of various compounds in secretory vesicles. Required for storage of some proteases in both connective tissue and mucosal mast cells and for storage of granzyme B in T-lymphocytes. Plays a role in localizing neutrophil elastase in azurophil granules of neutrophils. Mediates processing of MMP2. Plays a role in cytotoxic cell granule-mediated apoptosis by forming a complex with granzyme B which is delivered to cells by perforin to induce apoptosis. Regulates the secretion of TNF-alpha and may also regulate protease secretion. Inhibits bone mineralization. The protein is Serglycin (Srgn) of Mus musculus (Mouse).